Consider the following 280-residue polypeptide: uncharacterized protein (280 aa).

This sequence belongs to the eukaryotic-type primase small subunit family.

This is an uncharacterized protein from Archaeoglobus fulgidus (strain ATCC 49558 / DSM 4304 / JCM 9628 / NBRC 100126 / VC-16).